The following is a 182-amino-acid chain: HGPRTase-like protein 1 (182 aa).

Belongs to the purine/pyrimidine phosphoribosyltransferase family. Archaeal HPRT subfamily.

Its function is as follows. May catalyze a purine salvage reaction, the substrate is unknown. The sequence is that of HGPRTase-like protein 1 from Haloarcula marismortui (strain ATCC 43049 / DSM 3752 / JCM 8966 / VKM B-1809) (Halobacterium marismortui).